The following is a 58-amino-acid chain: ATP synthase F(0) complex subunit k, mitochondrial (58 aa).

Residues Lys16 and Lys17 each carry the N6-acetyllysine modification. The chain crosses the membrane as a helical span at residues 23 to 45 (TLTGRMNCVLATYGGIALLVLYF).

As to quaternary structure, component of the ATP synthase complex composed at least of ATP5F1A/subunit alpha, ATP5F1B/subunit beta, ATP5MC1/subunit c (homooctomer), MT-ATP6/subunit a, MT-ATP8/subunit 8, ATP5ME/subunit e, ATP5MF/subunit f, ATP5MG/subunit g, ATP5MK/subunit k, ATP5MJ/subunit j, ATP5F1C/subunit gamma, ATP5F1D/subunit delta, ATP5F1E/subunit epsilon, ATP5PF/subunit F6, ATP5PB/subunit b, ATP5PD/subunit d, ATP5PO/subunit OSCP. ATP synthase complex consists of a soluble F(1) head domain (subunits alpha(3) and beta(3)) - the catalytic core - and a membrane F(0) domain - the membrane proton channel (subunits c, a, 8, e, f, g, k and j). These two domains are linked by a central stalk (subunits gamma, delta, and epsilon) rotating inside the F1 region and a stationary peripheral stalk (subunits F6, b, d, and OSCP). The ATP synthase complex/complex V exists as a monomeric and a dimeric supercomplex that helps shape mitochondrial cristae to optimize proton flow. Ubiquitous. Highly expressed in skeletal and cardiac muscle. Moderately expressed in brain, thymus, stomach and testis. Lowest expression levels were detected in lung, liver, kidney, adrenal gland, spleen, small intestine and adipose tissue. In streptozotocin-induced diabetes, the insulin-sensitive tissues skeletal and cardiac muscle were down-regulated.

It localises to the mitochondrion membrane. Its function is as follows. Subunit k, of the mitochondrial membrane ATP synthase complex (F(1)F(0) ATP synthase or Complex V) that produces ATP from ADP in the presence of a proton gradient across the membrane which is generated by electron transport complexes of the respiratory chain. ATP synthase complex consist of a soluble F(1) head domain - the catalytic core - and a membrane F(1) domain - the membrane proton channel. These two domains are linked by a central stalk rotating inside the F(1) region and a stationary peripheral stalk. During catalysis, ATP synthesis in the catalytic domain of F(1) is coupled via a rotary mechanism of the central stalk subunits to proton translocation. In vivo, can only synthesize ATP although its ATP hydrolase activity can be activated artificially in vitro. Part of the complex F(0) domain. Required for dimerization of the ATP synthase complex and as such regulates ATP synthesis in the mitochondria. The polypeptide is ATP synthase F(0) complex subunit k, mitochondrial (Atp5mk) (Rattus norvegicus (Rat)).